A 276-amino-acid chain; its full sequence is Formamidopyrimidine-DNA glycosylase (276 aa).

The active-site Schiff-base intermediate with DNA is Pro-2. The active-site Proton donor is the Glu-3. Lys-58 serves as the catalytic Proton donor; for beta-elimination activity. The DNA site is built by His-94, Arg-112, and Arg-157. The FPG-type zinc-finger motif lies at 242–276 (FVYDRAGLPCRVCGTPIKQIVQGQRSTYFCPTCQR). The active-site Proton donor; for delta-elimination activity is Arg-266.

The protein belongs to the FPG family. Monomer. It depends on Zn(2+) as a cofactor.

The catalysed reaction is Hydrolysis of DNA containing ring-opened 7-methylguanine residues, releasing 2,6-diamino-4-hydroxy-5-(N-methyl)formamidopyrimidine.. The enzyme catalyses 2'-deoxyribonucleotide-(2'-deoxyribose 5'-phosphate)-2'-deoxyribonucleotide-DNA = a 3'-end 2'-deoxyribonucleotide-(2,3-dehydro-2,3-deoxyribose 5'-phosphate)-DNA + a 5'-end 5'-phospho-2'-deoxyribonucleoside-DNA + H(+). Involved in base excision repair of DNA damaged by oxidation or by mutagenic agents. Acts as a DNA glycosylase that recognizes and removes damaged bases. Has a preference for oxidized purines, such as 7,8-dihydro-8-oxoguanine (8-oxoG). Has AP (apurinic/apyrimidinic) lyase activity and introduces nicks in the DNA strand. Cleaves the DNA backbone by beta-delta elimination to generate a single-strand break at the site of the removed base with both 3'- and 5'-phosphates. The sequence is that of Formamidopyrimidine-DNA glycosylase from Paraburkholderia phytofirmans (strain DSM 17436 / LMG 22146 / PsJN) (Burkholderia phytofirmans).